Reading from the N-terminus, the 235-residue chain is Vacuolar protein sorting-associated protein 60.2 (235 aa).

Positions 1–30 (MKRIFGAKNNKEPPPSIQDASDRINKRGDS) are disordered. Positions 20–30 (ASDRINKRGDS) are enriched in basic and acidic residues. The stretch at 99–148 (LKDAQQTMTALKSANKELKGMMKTVKIQDIDNLQDDMMDLMDESSEIQET) forms a coiled coil. Residues 174–235 (DMGNETEADG…PAVPRASLRG (62 aa)) form a disordered region.

It belongs to the SNF7 family.

It localises to the endosome. Its subcellular location is the multivesicular body membrane. Functionally, probable peripherally associated component of the endosomal sorting required for transport complex III (ESCRT-III) which is involved in multivesicular bodies (MVBs) formation and sorting of endosomal cargo proteins into MVBs. The protein is Vacuolar protein sorting-associated protein 60.2 of Arabidopsis thaliana (Mouse-ear cress).